Here is a 501-residue protein sequence, read N- to C-terminus: ATP synthase subunit alpha, chloroplastic (501 aa).

Gly170–Thr177 lines the ATP pocket.

It belongs to the ATPase alpha/beta chains family. F-type ATPases have 2 components, CF(1) - the catalytic core - and CF(0) - the membrane proton channel. CF(1) has five subunits: alpha(3), beta(3), gamma(1), delta(1), epsilon(1). CF(0) has four main subunits: a, b, b' and c.

Its subcellular location is the plastid. It localises to the chloroplast thylakoid membrane. The enzyme catalyses ATP + H2O + 4 H(+)(in) = ADP + phosphate + 5 H(+)(out). Its function is as follows. Produces ATP from ADP in the presence of a proton gradient across the membrane. The alpha chain is a regulatory subunit. The polypeptide is ATP synthase subunit alpha, chloroplastic (Pisum sativum (Garden pea)).